The sequence spans 752 residues: Endo-1,4-beta-xylanase 3 (752 aa).

Residues 1-22 (MEKNTNTNHTSDDNNDKNHTNE) form a disordered region. The span at 10 to 22 (TSDDNNDKNHTNE) shows a compositional bias: basic and acidic residues. CBM-cenC domains are found at residues 26–163 (KIIL…EGPP) and 197–344 (NIVE…VQGP). Residues 397–692 (FPYIVKVKQT…NEAGKRFLEV (296 aa)) enclose the GH10 domain. Glu-526 acts as the Proton donor in catalysis. The active-site Nucleophile is the Glu-627.

Belongs to the glycosyl hydrolase 10 (cellulase F) family. As to expression, confined to immature xylems.

The catalysed reaction is Endohydrolysis of (1-&gt;4)-beta-D-xylosidic linkages in xylans.. The protein operates within glycan degradation; xylan degradation. Functionally, binds to and hydrolyzes insoluble and soluble xylan substrates. The sequence is that of Endo-1,4-beta-xylanase 3 from Arabidopsis thaliana (Mouse-ear cress).